Here is a 183-residue protein sequence, read N- to C-terminus: Dual-action ribosomal maturation protein DarP (183 aa).

This sequence belongs to the DarP family.

The protein resides in the cytoplasm. Member of a network of 50S ribosomal subunit biogenesis factors which assembles along the 30S-50S interface, preventing incorrect 23S rRNA structures from forming. Promotes peptidyl transferase center (PTC) maturation. The sequence is that of Dual-action ribosomal maturation protein DarP from Citrobacter koseri (strain ATCC BAA-895 / CDC 4225-83 / SGSC4696).